We begin with the raw amino-acid sequence, 123 residues long: Large ribosomal subunit protein uL18 (123 aa).

Belongs to the universal ribosomal protein uL18 family. In terms of assembly, part of the 50S ribosomal subunit; part of the 5S rRNA/L5/L18/L25 subcomplex. Contacts the 5S and 23S rRNAs.

This is one of the proteins that bind and probably mediate the attachment of the 5S RNA into the large ribosomal subunit, where it forms part of the central protuberance. In Desulforudis audaxviator (strain MP104C), this protein is Large ribosomal subunit protein uL18.